Here is a 472-residue protein sequence, read N- to C-terminus: MNFSLLTTEMLTALLGIGLLAIGLLNRKKDSHRGVAYAAVFGLLGILVVTFFQYGINTNTFHQLWILDDYSVFMKEIFLVAAILVILSAIDYVDGLPRFKTEFYALLVFATLGMMVMASANDLVTLYVGMELMTITFFILVAYILGDGRSSEAGVKYLLLGGASSAVLLYGLSLLYGLTGTTVIPDLLARLTWSPALAIAVVTIIAGFGFKISAVPFHMWSPDIYEGAPTPVTGFLAAASKAAGFAVLVRLFLEGMPLQGGADWLTVIAVLAGVTMVIGNVVAIPQTNIKRMLAYSSVAQAGYLLVGLMSTDAPGVKGILFYAMLYVVANMGAFAVATAVGRAIGSDEIADYAGLSQRQPLLASVMTISLLSLAGIPPLAGFVGKLYLFSAIMDKGVLWPAFLGFVMSMVSVYYYLNVSLYMWRDDPKDDRPIPVSGPMKLTVIFSMVVTVILGIYPGPLAEVATVAAKSLF.

The next 14 membrane-spanning stretches (helical) occupy residues 5-25, 36-56, 77-97, 103-123, 126-146, 158-178, 197-217, 229-249, 264-284, 292-309, 319-339, 363-383, 396-416, and 441-461; these read LLTT…IGLL, AYAA…QYGI, IFLV…DGLP, FYAL…ANDL, LYVG…YILG, LLLG…LYGL, LAIA…AVPF, PTPV…AVLV, WLTV…VVAI, MLAY…VGLM, ILFY…VATA, ASVM…AGFV, GVLW…YYYL, and LTVI…GPLA.

It belongs to the complex I subunit 2 family. As to quaternary structure, NDH-1 is composed of 14 different subunits. Subunits NuoA, H, J, K, L, M, N constitute the membrane sector of the complex.

The protein localises to the cell membrane. The catalysed reaction is a quinone + NADH + 5 H(+)(in) = a quinol + NAD(+) + 4 H(+)(out). Its function is as follows. NDH-1 shuttles electrons from NADH, via FMN and iron-sulfur (Fe-S) centers, to quinones in the respiratory chain. The immediate electron acceptor for the enzyme in this species is believed to be a menaquinone. Couples the redox reaction to proton translocation (for every two electrons transferred, four hydrogen ions are translocated across the cytoplasmic membrane), and thus conserves the redox energy in a proton gradient. This is NADH-quinone oxidoreductase subunit N from Heliobacterium modesticaldum (strain ATCC 51547 / Ice1).